Consider the following 227-residue polypeptide: Atypical response regulator protein ChxR (227 aa).

The Response regulatory domain occupies 6–108; it reads HVLLVSEHWD…ILKSAISLFL (103 aa). Positions 117–213 form a DNA-binding region, ompR/PhoB-type; the sequence is PESIRFGPNV…LRGVGYLFSD (97 aa).

Homodimer.

May be a global positive regulator of transcription. Binds a cis-acting element of its own promoter DNA sequence and is hence probably also involved in its own transcription activation. The recognition sequence is 5'-WHGAWNH-N(3-5)-WHGAWNH-3', where W is A/T, H is C/A/T, N is G/C/A/T and the linker length in the middle is 3 to 5 nucleotides. This Chlamydia trachomatis serovar L2 (strain ATCC VR-902B / DSM 19102 / 434/Bu) protein is Atypical response regulator protein ChxR.